The primary structure comprises 399 residues: Argininosuccinate synthase (399 aa).

8-16 (AYSGGLDTT) contributes to the ATP binding site. Y87 serves as a coordination point for L-citrulline. Residue G117 participates in ATP binding. Residues T119, N123, and D124 each contribute to the L-aspartate site. L-citrulline is bound at residue N123. R127, S175, E259, and Y271 together coordinate L-citrulline.

The protein belongs to the argininosuccinate synthase family. Type 1 subfamily. As to quaternary structure, homotetramer.

The protein resides in the cytoplasm. The catalysed reaction is L-citrulline + L-aspartate + ATP = 2-(N(omega)-L-arginino)succinate + AMP + diphosphate + H(+). Its pathway is amino-acid biosynthesis; L-arginine biosynthesis; L-arginine from L-ornithine and carbamoyl phosphate: step 2/3. The chain is Argininosuccinate synthase from Corynebacterium urealyticum (strain ATCC 43042 / DSM 7109).